The primary structure comprises 1013 residues: Tolloid-like protein 1 (1013 aa).

Residues 1–30 form the signal peptide; it reads MGLGTLSPRMLVWLVASGIVFYGELWVCAG. The propeptide occupies 31–147; it reads LDYDYTFDGN…GQNEKNRVPR (117 aa). The Peptidase M12A domain occupies 148 to 347; it reads AATSRTERIW…AQARKLYRCP (200 aa). The N-linked (GlcNAc...) asparagine glycan is linked to Asn-169. 4 disulfide bridges follow: Cys-190-Cys-346, Cys-210-Cys-232, Cys-212-Cys-213, and Cys-349-Cys-375. His-240 contacts Zn(2+). Glu-241 is a catalytic residue. The Zn(2+) site is built by His-244 and His-250. CUB domains are found at residues 349–461 and 462–574; these read CGET…YEAI and CGGE…FFKE. N-linked (GlcNAc...) asparagine glycans are attached at residues Asn-359 and Asn-390. Intrachain disulfides connect Cys-402/Cys-424, Cys-462/Cys-488, Cys-515/Cys-537, Cys-578/Cys-590, Cys-586/Cys-599, Cys-601/Cys-614, Cys-618/Cys-644, Cys-671/Cys-693, Cys-734/Cys-745, Cys-741/Cys-754, Cys-756/Cys-769, Cys-774/Cys-800, Cys-827/Cys-849, Cys-887/Cys-917, and Cys-944/Cys-966. One can recognise an EGF-like 1; calcium-binding domain in the interval 574–615; that stretch reads EEDECAKPDRGGCEQRCLNTLGSYQCACEPGYELGPDRRSCE. The 113-residue stretch at 618-730 folds into the CUB 3 domain; it reads CGGLLTKLNG…KGFKAHFFSD (113 aa). N-linked (GlcNAc...) asparagine glycosylation occurs at Asn-626. In terms of domain architecture, EGF-like 2; calcium-binding spans 730–770; that stretch reads DKDECSKDNGGCQHECVNTMGSYMCQCRNGFVLHDNKHDCK. CUB domains lie at 774–886 and 887–1003; these read CEQK…HSTE and CGGR…YKSI.

Zn(2+) is required as a cofactor.

Its subcellular location is the secreted. Protease which processes procollagen C-propeptides, such as chordin, pro-biglycan and pro-lysyl oxidase. Required for the embryonic development. Predominant protease, which in the development, influences dorsal-ventral patterning and skeletogenesis. This is Tolloid-like protein 1 (TLL1) from Homo sapiens (Human).